The chain runs to 485 residues: tRNA sulfurtransferase (485 aa).

Residues Glu61–Arg165 form the THUMP domain. Residues Leu183–Ile184, Lys265, Gly287, and Gln296 each bind ATP. Residues Cys344 and Cys456 are joined by a disulfide bond. Residues Leu404–Asn483 form the Rhodanese domain. Cys456 (cysteine persulfide intermediate) is an active-site residue.

This sequence belongs to the ThiI family.

It is found in the cytoplasm. The catalysed reaction is [ThiI sulfur-carrier protein]-S-sulfanyl-L-cysteine + a uridine in tRNA + 2 reduced [2Fe-2S]-[ferredoxin] + ATP + H(+) = [ThiI sulfur-carrier protein]-L-cysteine + a 4-thiouridine in tRNA + 2 oxidized [2Fe-2S]-[ferredoxin] + AMP + diphosphate. The enzyme catalyses [ThiS sulfur-carrier protein]-C-terminal Gly-Gly-AMP + S-sulfanyl-L-cysteinyl-[cysteine desulfurase] + AH2 = [ThiS sulfur-carrier protein]-C-terminal-Gly-aminoethanethioate + L-cysteinyl-[cysteine desulfurase] + A + AMP + 2 H(+). Its pathway is cofactor biosynthesis; thiamine diphosphate biosynthesis. In terms of biological role, catalyzes the ATP-dependent transfer of a sulfur to tRNA to produce 4-thiouridine in position 8 of tRNAs, which functions as a near-UV photosensor. Also catalyzes the transfer of sulfur to the sulfur carrier protein ThiS, forming ThiS-thiocarboxylate. This is a step in the synthesis of thiazole, in the thiamine biosynthesis pathway. The sulfur is donated as persulfide by IscS. This chain is tRNA sulfurtransferase, found in Haemophilus influenzae (strain PittGG).